A 385-amino-acid chain; its full sequence is Glucose-fructose oxidoreductase domain-containing protein 2 (385 aa).

Positions 1–25 (MKLLPGVGVFGTGSSARVLVPLLRA) are cleaved as a signal peptide.

Belongs to the Gfo/Idh/MocA family.

Its subcellular location is the secreted. It is found in the extracellular space. The protein localises to the extracellular matrix. In terms of biological role, promotes matrix assembly. This chain is Glucose-fructose oxidoreductase domain-containing protein 2 (Gfod2), found in Mus musculus (Mouse).